The chain runs to 40 residues: Ribosome-inactivating protein saporin-1 (40 aa).

It belongs to the ribosome-inactivating protein family. Type 1 RIP subfamily.

The catalysed reaction is Endohydrolysis of the N-glycosidic bond at one specific adenosine on the 28S rRNA.. Ribosome-inactivating protein of type 1, inhibits protein synthesis in animal cells. This chain is Ribosome-inactivating protein saporin-1 (SAP1), found in Saponaria officinalis (Common soapwort).